Consider the following 327-residue polypeptide: Putative HTH-type transcriptional regulatory protein Mbar_A2318 (327 aa).

One can recognise an HTH cro/C1-type domain in the interval Leu132–Leu190. The H-T-H motif DNA-binding region spans Leu143 to Glu162.

The polypeptide is Putative HTH-type transcriptional regulatory protein Mbar_A2318 (Methanosarcina barkeri (strain Fusaro / DSM 804)).